We begin with the raw amino-acid sequence, 310 residues long: GTPase Era (310 aa).

The 168-residue stretch at 17–184 (HSGFVALIGA…LDYLAQALPA (168 aa)) folds into the Era-type G domain. Residues 25–32 (GAPNAGKS) are G1. 25 to 32 (GAPNAGKS) provides a ligand contact to GTP. A G2 region spans residues 51–55 (QTTRA). Positions 72-75 (DTPG) are G3. Residues 72–76 (DTPGI) and 134–137 (NKVD) each bind GTP. A G4 region spans residues 134–137 (NKVD). The interval 163-165 (VSA) is G5. A KH type-2 domain is found at 215–292 (LHQELPYSSH…HLFLFVKVRE (78 aa)).

The protein belongs to the TRAFAC class TrmE-Era-EngA-EngB-Septin-like GTPase superfamily. Era GTPase family. As to quaternary structure, monomer.

The protein resides in the cytoplasm. The protein localises to the cell inner membrane. Functionally, an essential GTPase that binds both GDP and GTP, with rapid nucleotide exchange. Plays a role in 16S rRNA processing and 30S ribosomal subunit biogenesis and possibly also in cell cycle regulation and energy metabolism. This is GTPase Era from Mesorhizobium japonicum (strain LMG 29417 / CECT 9101 / MAFF 303099) (Mesorhizobium loti (strain MAFF 303099)).